We begin with the raw amino-acid sequence, 196 residues long: Adenylyl-sulfate kinase (196 aa).

31–38 (GLSGAGKS) contacts ATP. Serine 105 functions as the Phosphoserine intermediate in the catalytic mechanism.

Belongs to the APS kinase family.

It carries out the reaction adenosine 5'-phosphosulfate + ATP = 3'-phosphoadenylyl sulfate + ADP + H(+). Its pathway is sulfur metabolism; hydrogen sulfide biosynthesis; sulfite from sulfate: step 2/3. Functionally, catalyzes the synthesis of activated sulfate. This chain is Adenylyl-sulfate kinase (cysC), found in Pseudomonas aeruginosa (strain ATCC 15692 / DSM 22644 / CIP 104116 / JCM 14847 / LMG 12228 / 1C / PRS 101 / PAO1).